Reading from the N-terminus, the 286-residue chain is 4-hydroxy-3-methylbut-2-enyl diphosphate reductase (286 aa).

Position 12 (Cys-12) interacts with [4Fe-4S] cluster. Residues His-46 and His-79 each contribute to the (2E)-4-hydroxy-3-methylbut-2-enyl diphosphate site. The dimethylallyl diphosphate site is built by His-46 and His-79. Residues His-46 and His-79 each contribute to the isopentenyl diphosphate site. Cys-101 lines the [4Fe-4S] cluster pocket. (2E)-4-hydroxy-3-methylbut-2-enyl diphosphate is bound at residue His-129. Residue His-129 participates in dimethylallyl diphosphate binding. Position 129 (His-129) interacts with isopentenyl diphosphate. The active-site Proton donor is Glu-131. Thr-169 is a (2E)-4-hydroxy-3-methylbut-2-enyl diphosphate binding site. [4Fe-4S] cluster is bound at residue Cys-198. Residues Ser-226, Asn-228, and Ser-270 each contribute to the (2E)-4-hydroxy-3-methylbut-2-enyl diphosphate site. Dimethylallyl diphosphate-binding residues include Ser-226, Asn-228, and Ser-270. Ser-226, Asn-228, and Ser-270 together coordinate isopentenyl diphosphate.

Belongs to the IspH family. [4Fe-4S] cluster serves as cofactor.

The enzyme catalyses isopentenyl diphosphate + 2 oxidized [2Fe-2S]-[ferredoxin] + H2O = (2E)-4-hydroxy-3-methylbut-2-enyl diphosphate + 2 reduced [2Fe-2S]-[ferredoxin] + 2 H(+). It carries out the reaction dimethylallyl diphosphate + 2 oxidized [2Fe-2S]-[ferredoxin] + H2O = (2E)-4-hydroxy-3-methylbut-2-enyl diphosphate + 2 reduced [2Fe-2S]-[ferredoxin] + 2 H(+). The protein operates within isoprenoid biosynthesis; dimethylallyl diphosphate biosynthesis; dimethylallyl diphosphate from (2E)-4-hydroxy-3-methylbutenyl diphosphate: step 1/1. It participates in isoprenoid biosynthesis; isopentenyl diphosphate biosynthesis via DXP pathway; isopentenyl diphosphate from 1-deoxy-D-xylulose 5-phosphate: step 6/6. In terms of biological role, catalyzes the conversion of 1-hydroxy-2-methyl-2-(E)-butenyl 4-diphosphate (HMBPP) into a mixture of isopentenyl diphosphate (IPP) and dimethylallyl diphosphate (DMAPP). Acts in the terminal step of the DOXP/MEP pathway for isoprenoid precursor biosynthesis. The polypeptide is 4-hydroxy-3-methylbut-2-enyl diphosphate reductase (Solidesulfovibrio magneticus (strain ATCC 700980 / DSM 13731 / RS-1) (Desulfovibrio magneticus)).